Reading from the N-terminus, the 291-residue chain is Glycine--tRNA ligase alpha subunit (291 aa).

Belongs to the class-II aminoacyl-tRNA synthetase family. In terms of assembly, tetramer of two alpha and two beta subunits.

It localises to the cytoplasm. The catalysed reaction is tRNA(Gly) + glycine + ATP = glycyl-tRNA(Gly) + AMP + diphosphate. This is Glycine--tRNA ligase alpha subunit from Rhizorhabdus wittichii (strain DSM 6014 / CCUG 31198 / JCM 15750 / NBRC 105917 / EY 4224 / RW1) (Sphingomonas wittichii).